A 420-amino-acid polypeptide reads, in one-letter code: Pregnancy-associated glycoprotein 2 (420 aa).

Residues 1-15 (MKWLVILGLVALSDC) form the signal peptide. Asn-56 and Asn-79 each carry an N-linked (GlcNAc...) asparagine glycan. The Peptidase A1 domain maps to 76 to 417 (YVGNISIGTP…DEGQNRIGLA (342 aa)). The active site involves Asp-94. Cystine bridges form between Cys-107-Cys-112 and Cys-268-Cys-272. Residue Asp-277 is part of the active site. Cys-341 and Cys-376 are joined by a disulfide.

It belongs to the peptidase A1 family. In terms of tissue distribution, expressed throughout the chorion, with the signal localized exclusively over the trophectoderm.

The protein resides in the secreted. Its subcellular location is the extracellular space. The polypeptide is Pregnancy-associated glycoprotein 2 (PAG2) (Sus scrofa (Pig)).